A 1634-amino-acid polypeptide reads, in one-letter code: Phosphatidylinositol 4-phosphate 3-kinase C2 domain-containing subunit beta (1634 aa).

The tract at residues 2-298 (SSTQGNGEHW…YASRYGNRKN (297 aa)) is interaction with GRB2. 2 disordered regions span residues 45 to 188 (EENR…QPSD) and 259 to 315 (GRGP…VGSR). Positions 87 to 112 (SDPTLNYNSLSPQEGPPNHSTSQGPQ) are enriched in polar residues. The segment covering 176–187 (GSPSSSKISQPS) has biased composition (low complexity). The span at 259–270 (GRGPLDFSKDTS) shows a compositional bias: basic and acidic residues. Positions 375-463 (EVNLKVTVLC…DIDIRLQLME (89 aa)) constitute a PI3K-RBD domain. The 152-residue stretch at 635 to 786 (VYATHRIPII…DSVILQIDFP (152 aa)) folds into the C2 PI3K-type domain. Residues 805–981 (RYEFGSLREE…QYLLAALLCC (177 aa)) enclose the PIK helical domain. One can recognise a PI3K/PI4K catalytic domain in the interval 1050–1328 (VPRDCSYFNS…LIESSLGSVA (279 aa)). The segment at 1056–1062 (YFNSNAV) is G-loop. The catalytic loop stretch occupies residues 1192–1200 (GICDRHNDN). The segment at 1211 to 1237 (HIDFGRFLGHAQMFGNIKRDRAPFVFT) is activation loop. A PX domain is found at 1365 to 1481 (GRISDVFLCR…TFFHPLPRDE (117 aa)). The region spanning 1504 to 1624 (VGGEVKLSIS…DLAQEKTGWF (121 aa)) is the C2 domain.

Belongs to the PI3/PI4-kinase family. Part of a complex with ERBB2 and EGFR. Part of a complex with phosphorylated EGFR and GRB2. Interacts with phosphorylated EGFR and PDGFR, maybe indirectly. Interacts with GRB2. The cofactor is Ca(2+). Mg(2+) is required as a cofactor. It depends on Mn(2+) as a cofactor. As to expression, expressed in columnar and transitional epithelia, mononuclear cells, and ganglion cells (at protein level). Widely expressed, with highest levels in thymus and placenta and lowest in peripheral blood, skeletal muscle and kidney.

It is found in the microsome. Its subcellular location is the cell membrane. The protein resides in the cytoplasm. The protein localises to the cytosol. It localises to the nucleus. It is found in the endoplasmic reticulum. It carries out the reaction a 1,2-diacyl-sn-glycero-3-phospho-(1D-myo-inositol 4-phosphate) + ATP = a 1,2-diacyl-sn-glycero-3-phospho-(1D-myo-inositol-3,4-bisphosphate) + ADP + H(+). The enzyme catalyses a 1,2-diacyl-sn-glycero-3-phospho-(1D-myo-inositol) + ATP = a 1,2-diacyl-sn-glycero-3-phospho-(1D-myo-inositol-3-phosphate) + ADP + H(+). With respect to regulation, activated by GRB2. Functionally, phosphorylates PtdIns and PtdIns4P with a preference for PtdIns. Does not phosphorylate PtdIns(4,5)P2. May be involved in EGF and PDGF signaling cascades. The protein is Phosphatidylinositol 4-phosphate 3-kinase C2 domain-containing subunit beta (PIK3C2B) of Homo sapiens (Human).